A 185-amino-acid chain; its full sequence is Large ribosomal subunit protein uL5 (185 aa).

The protein belongs to the universal ribosomal protein uL5 family. Part of the 50S ribosomal subunit; part of the 5S rRNA/L5/L18/L25 subcomplex. Contacts the 5S rRNA and the P site tRNA. Forms a bridge to the 30S subunit in the 70S ribosome.

Its function is as follows. This is one of the proteins that bind and probably mediate the attachment of the 5S RNA into the large ribosomal subunit, where it forms part of the central protuberance. In the 70S ribosome it contacts protein S13 of the 30S subunit (bridge B1b), connecting the 2 subunits; this bridge is implicated in subunit movement. Contacts the P site tRNA; the 5S rRNA and some of its associated proteins might help stabilize positioning of ribosome-bound tRNAs. In Caulobacter sp. (strain K31), this protein is Large ribosomal subunit protein uL5.